Reading from the N-terminus, the 89-residue chain is Small ribosomal subunit protein uS15 (89 aa).

Belongs to the universal ribosomal protein uS15 family. As to quaternary structure, part of the 30S ribosomal subunit. Forms a bridge to the 50S subunit in the 70S ribosome, contacting the 23S rRNA.

Functionally, one of the primary rRNA binding proteins, it binds directly to 16S rRNA where it helps nucleate assembly of the platform of the 30S subunit by binding and bridging several RNA helices of the 16S rRNA. Forms an intersubunit bridge (bridge B4) with the 23S rRNA of the 50S subunit in the ribosome. The protein is Small ribosomal subunit protein uS15 of Chromobacterium violaceum (strain ATCC 12472 / DSM 30191 / JCM 1249 / CCUG 213 / NBRC 12614 / NCIMB 9131 / NCTC 9757 / MK).